Consider the following 750-residue polypeptide: Sulfhydryl oxidase 1 (750 aa).

An N-terminal signal peptide occupies residues 1-32; that stretch reads MRRCGRHSGPPSLLLLLLLLPPLLLSVPGAYA. In terms of domain architecture, Thioredoxin spans 33 to 159; the sequence is ARLSVLYSSS…RMRLIDALES (127 aa). Active-site nucleophile residues include cysteine 73 and cysteine 76. Cystine bridges form between cysteine 73–cysteine 76 and cysteine 104–cysteine 113. N-linked (GlcNAc...) asparagine glycans are attached at residues asparagine 133 and asparagine 246. Residues cysteine 396 and cysteine 408 are joined by a disulfide bond. The 108-residue stretch at 399-506 folds into the ERV/ALR sulfhydryl oxidase domain; the sequence is SEPHFRGFPC…EDPQFPKVQW (108 aa). FAD contacts are provided by residues arginine 404, tryptophan 411, histidine 415, aspartate 454, histidine 458, 481-488, lysine 503, and tryptophan 506; that span reads WTSHNRVN. A disulfide bridge links cysteine 452 with cysteine 455. A disulfide bridge connects residues cysteine 512 and cysteine 515. 2 disordered regions span residues 545-567 and 585-632; these read VRDP…ASPN and EQAA…PEHT. Over residues 587-597 the composition is skewed to low complexity; that stretch reads AASAASPGATA. Residues 710–730 form a helical membrane-spanning segment; the sequence is FLDISLCVGLYSVSFMGLLAM.

The protein belongs to the quiescin-sulfhydryl oxidase (QSOX) family. As to quaternary structure, monomer. FAD serves as cofactor. In terms of processing, N-glycosylated. O-glycosylated on Thr and Ser residues. As to expression, isoform 3: Detected in seminal vesicle fluid (at protein level). Isoform 1: Detected in brain, hypophysis, heart, testis and the seminal vesicle. Isoform 3: Highly expressed in the seminal vesicles followed by testis, heart, brain, thymus, hypophysis and lung. Also expressed in prostate, kidney, spleen, liver.

The protein resides in the golgi apparatus membrane. It localises to the secreted. It catalyses the reaction 2 R'C(R)SH + O2 = R'C(R)S-S(R)CR' + H2O2. Functionally, catalyzes the oxidation of sulfhydryl groups in peptide and protein thiols to disulfides with the reduction of oxygen to hydrogen peroxide. Plays a role in disulfide bond formation in a variety of extracellular proteins. In fibroblasts, required for normal incorporation of laminin into the extracellular matrix, and thereby for normal cell-cell adhesion and cell migration. The sequence is that of Sulfhydryl oxidase 1 (Qsox1) from Rattus norvegicus (Rat).